The primary structure comprises 562 residues: Valerena-4,7(11)-diene synthase (562 aa).

Mg(2+) contacts are provided by aspartate 314, aspartate 318, and glutamate 467. Positions 314 to 318 (DDTYD) match the DDXXD motif motif.

The protein belongs to the terpene synthase family. Requires Mg(2+) as cofactor. Predominantly expressed in root.

It catalyses the reaction (2E,6E)-farnesyl diphosphate = valerena-4,7(11)-diene + diphosphate. Its function is as follows. Catalyzes formation of valerena-4,7(11)-diene, one of the active ingredients responsible for the sedative effect extracted from Valeriana officinalis root. The polypeptide is Valerena-4,7(11)-diene synthase (TPS2) (Valeriana officinalis (Valerian)).